The primary structure comprises 66 residues: Large ribosomal subunit protein bL33B (66 aa).

Belongs to the bacterial ribosomal protein bL33 family.

The polypeptide is Large ribosomal subunit protein bL33B (Synechococcus sp. (strain CC9605)).